The following is a 50-amino-acid chain: Large ribosomal subunit protein bL33 (50 aa).

It belongs to the bacterial ribosomal protein bL33 family.

The protein is Large ribosomal subunit protein bL33 of Citrifermentans bemidjiense (strain ATCC BAA-1014 / DSM 16622 / JCM 12645 / Bem) (Geobacter bemidjiensis).